Reading from the N-terminus, the 210-residue chain is Large ribosomal subunit protein uL5 (210 aa).

The tract at residues 188–210 is disordered; the sequence is AKDDPKKAKTKRGPAYYAKKKKK. Residues 195–210 are compositionally biased toward basic residues; sequence AKTKRGPAYYAKKKKK.

This sequence belongs to the universal ribosomal protein uL5 family. Part of the 50S ribosomal subunit; part of the 5S rRNA/L5/L18/L25 subcomplex. Contacts the 5S rRNA and the P site tRNA. Forms a bridge to the 30S subunit in the 70S ribosome.

In terms of biological role, this is one of the proteins that bind and probably mediate the attachment of the 5S RNA into the large ribosomal subunit, where it forms part of the central protuberance. In the 70S ribosome it contacts protein S13 of the 30S subunit (bridge B1b), connecting the 2 subunits; this bridge is implicated in subunit movement. Contacts the P site tRNA; the 5S rRNA and some of its associated proteins might help stabilize positioning of ribosome-bound tRNAs. This Cutibacterium acnes (strain DSM 16379 / KPA171202) (Propionibacterium acnes) protein is Large ribosomal subunit protein uL5.